The chain runs to 133 residues: Small ribosomal subunit protein uS9 (133 aa).

The segment covering 98 to 113 has biased composition (basic and acidic residues); it reads RKPLKTEGHLSRDPRA. The interval 98–133 is disordered; the sequence is RKPLKTEGHLSRDPRAKERRKYGLKKARKAPQFSKR. A compositionally biased stretch (basic residues) spans 114 to 133; it reads KERRKYGLKKARKAPQFSKR.

This sequence belongs to the universal ribosomal protein uS9 family.

This chain is Small ribosomal subunit protein uS9, found in Synechococcus sp. (strain CC9902).